We begin with the raw amino-acid sequence, 350 residues long: Histidinol-phosphate aminotransferase (350 aa).

An N6-(pyridoxal phosphate)lysine modification is found at Lys209.

Belongs to the class-II pyridoxal-phosphate-dependent aminotransferase family. Histidinol-phosphate aminotransferase subfamily. As to quaternary structure, homodimer. It depends on pyridoxal 5'-phosphate as a cofactor.

The enzyme catalyses L-histidinol phosphate + 2-oxoglutarate = 3-(imidazol-4-yl)-2-oxopropyl phosphate + L-glutamate. It participates in amino-acid biosynthesis; L-histidine biosynthesis; L-histidine from 5-phospho-alpha-D-ribose 1-diphosphate: step 7/9. The chain is Histidinol-phosphate aminotransferase from Citrifermentans bemidjiense (strain ATCC BAA-1014 / DSM 16622 / JCM 12645 / Bem) (Geobacter bemidjiensis).